A 100-amino-acid chain; its full sequence is Large ribosomal subunit protein bL27 (100 aa).

A propeptide spanning residues 1–9 (MLSINLSLC) is cleaved from the precursor.

This sequence belongs to the bacterial ribosomal protein bL27 family. In terms of processing, the N-terminus is cleaved by ribosomal processing cysteine protease Prp.

This chain is Large ribosomal subunit protein bL27, found in Clostridium acetobutylicum (strain ATCC 824 / DSM 792 / JCM 1419 / IAM 19013 / LMG 5710 / NBRC 13948 / NRRL B-527 / VKM B-1787 / 2291 / W).